Reading from the N-terminus, the 96-residue chain is UPF0235 protein CKO_04329 (96 aa).

Belongs to the UPF0235 family.

The sequence is that of UPF0235 protein CKO_04329 from Citrobacter koseri (strain ATCC BAA-895 / CDC 4225-83 / SGSC4696).